The primary structure comprises 461 residues: Protein KlcB (461 aa).

2 disordered regions span residues 84-107 (PEAT…TEDK) and 349-379 (RAKA…EDAP). The span at 91–101 (ARRRTKARKSK) shows a compositional bias: basic residues. Basic and acidic residues predominate over residues 357 to 377 (GQRREPVTPAKPEPEPAKDED).

This is Protein KlcB (klcB) from Escherichia coli.